The chain runs to 405 residues: Riboflavin biosynthesis protein RibBA (405 aa).

The segment at methionine 1–arginine 205 is DHBP synthase. D-ribulose 5-phosphate contacts are provided by residues arginine 30–glutamate 31, aspartate 35, arginine 144–threonine 148, and glutamate 168. Residue glutamate 31 coordinates Mg(2+). Histidine 147 provides a ligand contact to Mg(2+). The segment at threonine 206–lysine 405 is GTP cyclohydrolase II. Arginine 256–serine 260 lines the GTP pocket. Zn(2+)-binding residues include cysteine 261, cysteine 272, and cysteine 274. GTP-binding positions include glutamine 277, glutamate 299 to arginine 301, and threonine 321. The Proton acceptor; for GTP cyclohydrolase activity role is filled by aspartate 333. Arginine 335 (nucleophile; for GTP cyclohydrolase activity) is an active-site residue. GTP-binding residues include serine 356 and lysine 361.

The protein in the N-terminal section; belongs to the DHBP synthase family. In the C-terminal section; belongs to the GTP cyclohydrolase II family. The cofactor is Mg(2+). Mn(2+) is required as a cofactor. It depends on Zn(2+) as a cofactor.

The catalysed reaction is D-ribulose 5-phosphate = (2S)-2-hydroxy-3-oxobutyl phosphate + formate + H(+). It catalyses the reaction GTP + 4 H2O = 2,5-diamino-6-hydroxy-4-(5-phosphoribosylamino)-pyrimidine + formate + 2 phosphate + 3 H(+). Its pathway is cofactor biosynthesis; riboflavin biosynthesis; 2-hydroxy-3-oxobutyl phosphate from D-ribulose 5-phosphate: step 1/1. It participates in cofactor biosynthesis; riboflavin biosynthesis; 5-amino-6-(D-ribitylamino)uracil from GTP: step 1/4. Functionally, catalyzes the conversion of D-ribulose 5-phosphate to formate and 3,4-dihydroxy-2-butanone 4-phosphate. Its function is as follows. Catalyzes the conversion of GTP to 2,5-diamino-6-ribosylamino-4(3H)-pyrimidinone 5'-phosphate (DARP), formate and pyrophosphate. This chain is Riboflavin biosynthesis protein RibBA, found in Parabacteroides distasonis (strain ATCC 8503 / DSM 20701 / CIP 104284 / JCM 5825 / NCTC 11152).